The primary structure comprises 340 residues: Annexin A2-B (340 aa).

Positions 2–25 (ALIHEILGKLSLEGNQSSSRQSKL) are P10 binding site. The residue at position 27 (Ser27) is a Phosphoserine; by PKC. 4 Annexin repeats span residues 34–105 (FDAE…GLIK), 106–177 (TRPQ…ALAK), 190–262 (EKID…NLVQ), and 266–337 (NKPL…NLCG).

It belongs to the annexin family. In terms of assembly, tetramer of 2 light chains (p10 proteins) and 2 heavy chains (p36 proteins). Adult brain, heart, striated muscle, liver, kidney, and very high levels in skin.

Its subcellular location is the secreted. It is found in the extracellular space. The protein localises to the extracellular matrix. It localises to the basement membrane. In terms of biological role, calcium-regulated membrane-binding protein whose affinity for calcium is greatly enhanced by anionic phospholipids. It binds two calcium ions with high affinity. In Xenopus laevis (African clawed frog), this protein is Annexin A2-B (anxa2-b).